The following is a 123-amino-acid chain: Aberrant microtubules protein 1 (123 aa).

In terms of biological role, required for normal microtubule organization. The protein is Aberrant microtubules protein 1 (ABM1) of Saccharomyces cerevisiae (strain ATCC 204508 / S288c) (Baker's yeast).